Consider the following 864-residue polypeptide: Probable M1 family aminopeptidase 1 (864 aa).

Substrate-binding positions include Glu149 and 289-293 (GAMEN). His325 is a Zn(2+) binding site. Glu326 acts as the Proton acceptor in catalysis. Positions 329 and 348 each coordinate Zn(2+).

Belongs to the peptidase M1 family. The cofactor is Zn(2+).

The chain is Probable M1 family aminopeptidase 1 from Encephalitozoon cuniculi (strain GB-M1) (Microsporidian parasite).